The sequence spans 421 residues: uncharacterized protein (421 aa).

This is an uncharacterized protein from Bacillus subtilis (strain 168).